Reading from the N-terminus, the 332-residue chain is DNA-directed RNA polymerase subunit alpha (332 aa).

The tract at residues 1 to 226 (MLIAQRPTLT…ELFGLARELN (226 aa)) is alpha N-terminal domain (alpha-NTD). The alpha C-terminal domain (alpha-CTD) stretch occupies residues 243 to 332 (LSSELSMPIE…GYDEDESTTI (90 aa)).

This sequence belongs to the RNA polymerase alpha chain family. In terms of assembly, homodimer. The RNAP catalytic core consists of 2 alpha, 1 beta, 1 beta' and 1 omega subunit. When a sigma factor is associated with the core the holoenzyme is formed, which can initiate transcription.

The enzyme catalyses RNA(n) + a ribonucleoside 5'-triphosphate = RNA(n+1) + diphosphate. Its function is as follows. DNA-dependent RNA polymerase catalyzes the transcription of DNA into RNA using the four ribonucleoside triphosphates as substrates. This chain is DNA-directed RNA polymerase subunit alpha, found in Leifsonia xyli subsp. xyli (strain CTCB07).